Here is a 70-residue protein sequence, read N- to C-terminus: ATP synthase subunit c (70 aa).

A run of 2 helical transmembrane segments spans residues 4-24 (IASA…NGLI) and 47-67 (FVGV…AFMV).

It belongs to the ATPase C chain family. As to quaternary structure, F-type ATPases have 2 components, F(1) - the catalytic core - and F(0) - the membrane proton channel. F(1) has five subunits: alpha(3), beta(3), gamma(1), delta(1), epsilon(1). F(0) has three main subunits: a(1), b(2) and c(10-14). The alpha and beta chains form an alternating ring which encloses part of the gamma chain. F(1) is attached to F(0) by a central stalk formed by the gamma and epsilon chains, while a peripheral stalk is formed by the delta and b chains.

It localises to the cell membrane. Functionally, f(1)F(0) ATP synthase produces ATP from ADP in the presence of a proton or sodium gradient. F-type ATPases consist of two structural domains, F(1) containing the extramembraneous catalytic core and F(0) containing the membrane proton channel, linked together by a central stalk and a peripheral stalk. During catalysis, ATP synthesis in the catalytic domain of F(1) is coupled via a rotary mechanism of the central stalk subunits to proton translocation. Its function is as follows. Key component of the F(0) channel; it plays a direct role in translocation across the membrane. A homomeric c-ring of between 10-14 subunits forms the central stalk rotor element with the F(1) delta and epsilon subunits. The protein is ATP synthase subunit c of Priestia megaterium (strain ATCC 12872 / QMB1551) (Bacillus megaterium).